The sequence spans 157 residues: Small ribosomal subunit protein uS7 (157 aa).

The protein belongs to the universal ribosomal protein uS7 family. Part of the 30S ribosomal subunit. Contacts proteins S9 and S11.

In terms of biological role, one of the primary rRNA binding proteins, it binds directly to 16S rRNA where it nucleates assembly of the head domain of the 30S subunit. Is located at the subunit interface close to the decoding center, probably blocks exit of the E-site tRNA. This Rhodopirellula baltica (strain DSM 10527 / NCIMB 13988 / SH1) protein is Small ribosomal subunit protein uS7.